A 423-amino-acid chain; its full sequence is Zinc finger and BTB domain-containing protein 6 (423 aa).

Positions 33-97 constitute a BTB domain; it reads CDVSIYINDT…CYTGALEVKR (65 aa). Residue serine 201 is modified to Phosphoserine. 4 consecutive C2H2-type zinc fingers follow at residues 300 to 322, 325 to 347, 353 to 375, and 381 to 404; these read HQCPRCPRGFLHVENYLRHLKMH, FLCLQCGKTFTQKKNLNRHIRGH, FQCTVCLKTFTAKSTLQDHLNIH, and YKCHCCDMDFKHKSALKKHLTSVH.

Its subcellular location is the nucleus. Its function is as follows. May be involved in transcriptional regulation. This Mus musculus (Mouse) protein is Zinc finger and BTB domain-containing protein 6 (Zbtb6).